Here is a 243-residue protein sequence, read N- to C-terminus: MSVIRNILNSRSSKGGNFFNTLHKLLGFRPKDLSVYERAFTHRSLNVKDPSGNPINYERLEFLGDAMLGSVIASHLYQEVPEGDEGYLTKMRSKIVSRKHLNELGKDLNLIRFVKSNIPNDQFGVNIHGNIFEALVGAIYLDRGYKYCNRFIYNRVIEPYVDIETLEGRVISYKSLLIEWCQKQKKEFNYQVYEDTGRDELKHFAVKLWIDKKVIAKARATSKKKAEEKASKRAYYALQNKMN.

One can recognise an RNase III domain in the interval 19-144 (FNTLHKLLGF…LVGAIYLDRG (126 aa)). A Mg(2+)-binding site is contributed by glutamate 61. The active site involves aspartate 65. Asparagine 130 and glutamate 133 together coordinate Mg(2+). The active site involves glutamate 133. Residues 172–240 (SYKSLLIEWC…SKRAYYALQN (69 aa)) enclose the DRBM domain.

This sequence belongs to the ribonuclease III family. As to quaternary structure, homodimer. It depends on Mg(2+) as a cofactor.

Its subcellular location is the cytoplasm. The catalysed reaction is Endonucleolytic cleavage to 5'-phosphomonoester.. Its function is as follows. Digests double-stranded RNA. Involved in the processing of primary rRNA transcript to yield the immediate precursors to the large and small rRNAs (23S and 16S). Processes some mRNAs, and tRNAs when they are encoded in the rRNA operon. Processes pre-crRNA and tracrRNA of type II CRISPR loci if present in the organism. The sequence is that of Ribonuclease 3 (rnc) from Zunongwangia profunda (strain DSM 18752 / CCTCC AB 206139 / SM-A87) (Wangia profunda).